We begin with the raw amino-acid sequence, 186 residues long: Ribosome-recycling factor (186 aa).

This sequence belongs to the RRF family.

It is found in the cytoplasm. In terms of biological role, responsible for the release of ribosomes from messenger RNA at the termination of protein biosynthesis. May increase the efficiency of translation by recycling ribosomes from one round of translation to another. The polypeptide is Ribosome-recycling factor (Azorhizobium caulinodans (strain ATCC 43989 / DSM 5975 / JCM 20966 / LMG 6465 / NBRC 14845 / NCIMB 13405 / ORS 571)).